A 1148-amino-acid polypeptide reads, in one-letter code: MDTPESPTQSPQSPEEEEKGLSDNELLESPESPAEADKGVSDSELLNDDENEVPEHGGDSDSEDRDRQPAGREDPEELSDVEDYKLDREEREDIHQQEGALRVQEIAQKAIKSPEEEILETPRSPDPVSPAAEHERPFTPAEEERGDDDEEEEEDETTTKSGLGQAELEEEEDEEEERRRRRRAAMVVSDLKDESSVSRDLDEHELDYDEEVPEEPSAAAPEEDEPEKPAVGEDGEDEEEEDEEEEKRRKRKERKPILPPDNRDTPLRKSEDSREGGRRDSFRDKKKEEDDGEIDEGEIDDDDLEEGEVKDPMDRKIRPRPICRFFMKGSFVTMYGNVKFFFFKSYLVFLTGNCTWGMICRFIHPGVNDKGNYSLISKPDPFSPNGAPPGGAAGGGPHPLMPANPWGAPAVEELPPPPPPLDPPVESAWERGLRHAKEVLKKATIRKEQEPDFEEKRFTVTIGEDDRDFDKENDFFRERGGYRITREIRDAGSDPYGDPYYDYEMEAFWRGGQYENFRVQYTETPLPYYPDRERERDPRERHRERERERERDHRERERRQREREREREREREKDSRRRKDEWDRDRLKRDEKEGRPRERPLREPREKKDEKEKTLKPRSPTNMPPRGPMEPPTKKDMLSVTKRPDEWNDPWCRSKSPRRRPGFMGSPPRGRRRHRPSGSSVSLSNSSRSSSRSSSFTGSGSSRSRSRSRSSSMSSYSSHSSQHSSFSGSRSRSGSFSSSPSPSPSAQRNANKNKAEQPPAAAKGPPLKPGALPPPRRDKGPPKVMPSPSLPEQPGKPPKPITETVKPPNPRPPGRPPGPREPREPPNMREGRKKERQQHNPPRRRTVSGSVSGSSYSGSSSRSRSRSSSASASRSGSHKSRSLSVSSVSSVSSASSSSSSVRSADSDDMYADLASPVSSASSRSPTPGHPRKDRGPPRERGPNKERGKPPKKDEPFKDERKRVDPSGLPSKASSDMPRSGNRGHPMHPPPMGPPGGYGSHKDIKLTLLNKQQTDRSNRKRYFPSDKERPPSPLRKRMAMSPDGGRDRRMPGRPPMSPRMERPKGQGPRPMPSQGERKRPLSPPAKSSGKGPAAASAAKPPAPGAGSGSASGSAPGKPSSTLSRREELLKQLKAVEDAIARKRAKIPGK.

Residues Met-1–Ser-13 show a composition bias toward low complexity. Disordered stretches follow at residues Met-1 to Arg-315, Asp-380 to Pro-417, and Tyr-521 to Leu-1127. Composition is skewed to basic and acidic residues over residues Val-53–Glu-73 and Glu-82–Gln-96. Acidic residues-rich tracts occupy residues Glu-144–Glu-156 and Glu-167–Glu-176. Positions Asp-190 to Asp-202 are enriched in basic and acidic residues. Acidic residues-rich tracts occupy residues Glu-203 to Glu-214 and Glu-233 to Glu-245. Basic and acidic residues predominate over residues Asp-261–Glu-289. Acidic residues predominate over residues Asp-290–Glu-306. The span at Pro-388 to Pro-397 shows a compositional bias: gly residues. Residues Pro-530–Leu-615 are compositionally biased toward basic and acidic residues. Positions Arg-543 to Arg-584 form a coiled coil. The segment covering Asn-622–Pro-631 has biased composition (pro residues). A compositionally biased stretch (basic and acidic residues) spans Pro-632–Glu-646. Ser-666 is modified (phosphoserine). A compositionally biased stretch (low complexity) spans Ser-677–Pro-740. Composition is skewed to pro residues over residues Lys-783–Pro-800 and Pro-807–Pro-817. Residues Gly-818–Lys-833 are compositionally biased toward basic and acidic residues. Composition is skewed to low complexity over residues Val-847–Ser-875, Ser-882–Ser-903, and Ala-914–Pro-925. Composition is skewed to basic and acidic residues over residues Asp-933–Asp-964 and Gln-1012–Pro-1029. A Phosphoserine modification is found at Ser-1056. Composition is skewed to low complexity over residues Pro-1083–Lys-1098 and Gly-1107–Ser-1119. Residues Ser-1118 to Pro-1146 are a coiled coil.

It localises to the nucleus. The chain is Zinc finger CCCH domain-containing protein 18 (zc3h18) from Danio rerio (Zebrafish).